A 292-amino-acid polypeptide reads, in one-letter code: NAD kinase (292 aa).

D73 acts as the Proton acceptor in catalysis. NAD(+) contacts are provided by residues 73-74 (DG), 147-148 (NE), H158, R175, D177, 188-193 (TAYSLS), and Q247.

The protein belongs to the NAD kinase family. Requires a divalent metal cation as cofactor.

The protein resides in the cytoplasm. The enzyme catalyses NAD(+) + ATP = ADP + NADP(+) + H(+). In terms of biological role, involved in the regulation of the intracellular balance of NAD and NADP, and is a key enzyme in the biosynthesis of NADP. Catalyzes specifically the phosphorylation on 2'-hydroxyl of the adenosine moiety of NAD to yield NADP. In Escherichia coli (strain SMS-3-5 / SECEC), this protein is NAD kinase.